A 931-amino-acid polypeptide reads, in one-letter code: Isoleucine--tRNA ligase (931 aa).

The 'HIGH' region signature appears at 58–68 (PYANGHLHCGH). E559 lines the L-isoleucyl-5'-AMP pocket. The 'KMSKS' region signature appears at 600–604 (KLSKS). K603 provides a ligand contact to ATP. Zn(2+) contacts are provided by C894, C897, C914, and C917.

This sequence belongs to the class-I aminoacyl-tRNA synthetase family. IleS type 1 subfamily. Monomer. It depends on Zn(2+) as a cofactor.

Its subcellular location is the cytoplasm. It catalyses the reaction tRNA(Ile) + L-isoleucine + ATP = L-isoleucyl-tRNA(Ile) + AMP + diphosphate. Catalyzes the attachment of isoleucine to tRNA(Ile). As IleRS can inadvertently accommodate and process structurally similar amino acids such as valine, to avoid such errors it has two additional distinct tRNA(Ile)-dependent editing activities. One activity is designated as 'pretransfer' editing and involves the hydrolysis of activated Val-AMP. The other activity is designated 'posttransfer' editing and involves deacylation of mischarged Val-tRNA(Ile). The chain is Isoleucine--tRNA ligase from Legionella pneumophila (strain Paris).